The sequence spans 342 residues: GTP 3',8-cyclase (342 aa).

In terms of domain architecture, Radical SAM core spans Gly18–Ala247. Residue Arg27 coordinates GTP. Positions 34 and 38 each coordinate [4Fe-4S] cluster. Tyr40 contributes to the S-adenosyl-L-methionine binding site. Residue Cys41 coordinates [4Fe-4S] cluster. Arg81 provides a ligand contact to GTP. Residue Gly85 participates in S-adenosyl-L-methionine binding. Thr112 serves as a coordination point for GTP. Ser136 provides a ligand contact to S-adenosyl-L-methionine. GTP is bound at residue Lys173. Residue Met207 coordinates S-adenosyl-L-methionine. The [4Fe-4S] cluster site is built by Cys270 and Cys273. Residue Arg275–Arg277 coordinates GTP. Position 287 (Cys287) interacts with [4Fe-4S] cluster.

It belongs to the radical SAM superfamily. MoaA family. As to quaternary structure, monomer and homodimer. Requires [4Fe-4S] cluster as cofactor.

The enzyme catalyses GTP + AH2 + S-adenosyl-L-methionine = (8S)-3',8-cyclo-7,8-dihydroguanosine 5'-triphosphate + 5'-deoxyadenosine + L-methionine + A + H(+). It functions in the pathway cofactor biosynthesis; molybdopterin biosynthesis. Its function is as follows. Catalyzes the cyclization of GTP to (8S)-3',8-cyclo-7,8-dihydroguanosine 5'-triphosphate. This Aeromonas hydrophila subsp. hydrophila (strain ATCC 7966 / DSM 30187 / BCRC 13018 / CCUG 14551 / JCM 1027 / KCTC 2358 / NCIMB 9240 / NCTC 8049) protein is GTP 3',8-cyclase.